A 364-amino-acid chain; its full sequence is Developmentally-regulated GTP-binding protein 2 homolog (364 aa).

The OBG-type G domain occupies 63 to 288 (ARVALIGFPS…LLDKIWDYLN (226 aa)). Residues 69 to 76 (GFPSVGKS), 115 to 119 (DTPGI), and 246 to 249 (NKMD) contribute to the GTP site. The region spanning 288–363 (NLVRVYTKLR…EDEDVIQIVK (76 aa)) is the TGS domain.

This sequence belongs to the TRAFAC class OBG-HflX-like GTPase superfamily. OBG GTPase family.

The chain is Developmentally-regulated GTP-binding protein 2 homolog (drg2) from Dictyostelium discoideum (Social amoeba).